Reading from the N-terminus, the 545-residue chain is MSRKQSQKDSSGFIFDLQSNTVLAQGGTFENMKEKINAVRAIVPNKSNNEIILVLQHFDNCVDKTVQAFMEGSASEVLKEWIVTGKKKNKKKKSKPKPASEASGSAPDSSKSAPIQEEQPASSEKGSINGYHVNGAINDAESVDSLSEGLETLSIDARELEDPEFAAAETLDRTGSVLENGVSDFEPKSLTAHSISNVQQSRNAAKSLSRTTPGAQVSNLGMENVPLSSTNKKLGSNIEKSVKDLQRCTVSLARYRVVVKEEMDASIKKMKQAFAELQSCLMDREVALLAEMDKVKAEAMEILLSRQKKAELLKKMTDVAVRMSEEQLVELRADIKHFVSERKYDEDLGRVARFTCDVETLKQSIDSFGQVSHPKNSYSTRSRCSLVAPVSLSGPSDGSAASSSPDASVPSLPGANKRNCAPREASAAMTNSSDRPCQAHREVFPGNRRGGQGYRAQSQKTADPSNPGRHDSVGRYRNSSWYSSGPRYQGVPPQAPGNAGERSRPYSAGTNGTGAISEPSPPKPSFKKGLPQRKPRASQAEAANS.

The segment covering 87–96 has biased composition (basic residues); that stretch reads KKNKKKKSKP. Residues 87 to 133 are disordered; it reads KKNKKKKSKPKPASEASGSAPDSSKSAPIQEEQPASSEKGSINGYHV. Residues 97–107 are compositionally biased toward low complexity; sequence KPASEASGSAP. The span at 108-126 shows a compositional bias: polar residues; the sequence is DSSKSAPIQEEQPASSEKG. Phosphoserine is present on residues serine 142, serine 145, and serine 147. 2 disordered regions span residues 202 to 232 and 390 to 545; these read RNAA…STNK and VSLS…AANS. The span at 391–413 shows a compositional bias: low complexity; sequence SLSGPSDGSAASSSPDASVPSLP. Positions 455–464 are enriched in polar residues; it reads RAQSQKTADP. Phosphoserine is present on serine 520.

The protein belongs to the SPATS2 family. In terms of tissue distribution, detected in testis, in spermatocytes and round spermatids (at protein level). Highly expressed in testis, and detected at lower levels in brain, heart, thymus, skeletal muscle, ovary, stomach and lung.

The protein localises to the cytoplasm. This is Spermatogenesis-associated serine-rich protein 2 (Spats2) from Mus musculus (Mouse).